We begin with the raw amino-acid sequence, 499 residues long: E3 ubiquitin-protein ligase TRIM69 (499 aa).

The segment at 1–152 (MEVSSRPPSN…SMGQSKDFLQ (152 aa)) is necessary for nuclear localization. The segment at 41 to 82 (CPLCNDWFRDPLMLTCGHNFCQACIQNYWKMQAKETFCPECK) adopts an RING-type zinc-finger fold. A coiled-coil region spans residues 160–265 (FTEELAIYQS…NIQARMEQQN (106 aa)). One can recognise a B30.2/SPRY domain in the interval 305–499 (PIQYTIWREM…KEPLHIVHPQ (195 aa)). S341 is modified (phosphoserine).

The protein belongs to the TRIM/RBCC family. As to quaternary structure, homo-multimer; required for antiviral activity. Interacts with PML. Phosphorylated. Phosphorylation is necessary for nuclear localization.

It localises to the cytoplasm. The protein resides in the nucleus. It is found in the nucleus speckle. Its subcellular location is the cytoskeleton. The protein localises to the microtubule organizing center. It localises to the centrosome. The catalysed reaction is S-ubiquitinyl-[E2 ubiquitin-conjugating enzyme]-L-cysteine + [acceptor protein]-L-lysine = [E2 ubiquitin-conjugating enzyme]-L-cysteine + N(6)-ubiquitinyl-[acceptor protein]-L-lysine.. It participates in protein modification; protein ubiquitination. E3 ubiquitin ligase that plays an important role in antiviral immunity by restricting different viral infections including dengue virus or vesicular stomatitis indiana virus. Ubiquitinates viral proteins such as dengue virus NS3 thereby limiting infection. In addition, acts as a key mediator of type I interferon induced microtubule stabilization by directly associating to microtubules independently of its E3 ligase activity. Also plays a role in cataract formation together with TP53. Mechanistically, inhibits UVB-induced cell apoptosis and reactive oxygen species (ROS) production by inducing TP53 ubiquitination. Regulates centrosome dynamics and mitotic progression by ubiquitinating STK3/MST2; leading to its redistribution to the perinuclear cytoskeleton and subsequent phosphorylation by PLK1. The chain is E3 ubiquitin-protein ligase TRIM69 (Trim69) from Rattus norvegicus (Rat).